The chain runs to 675 residues: Methionine--tRNA ligase (675 aa).

A 'HIGH' region motif is present at residues 15–25 (PYANGSIHLGH). Zn(2+)-binding residues include cysteine 146, cysteine 149, cysteine 159, and cysteine 162. The short motif at 332 to 336 (KMSKS) is the 'KMSKS' region element. An ATP-binding site is contributed by lysine 335. A tRNA-binding domain is found at 573-675 (DFAKVDMRIA…SGAQPGMQVK (103 aa)).

This sequence belongs to the class-I aminoacyl-tRNA synthetase family. MetG type 1 subfamily. As to quaternary structure, homodimer. It depends on Zn(2+) as a cofactor.

It localises to the cytoplasm. The enzyme catalyses tRNA(Met) + L-methionine + ATP = L-methionyl-tRNA(Met) + AMP + diphosphate. In terms of biological role, is required not only for elongation of protein synthesis but also for the initiation of all mRNA translation through initiator tRNA(fMet) aminoacylation. This is Methionine--tRNA ligase from Yersinia pseudotuberculosis serotype O:1b (strain IP 31758).